We begin with the raw amino-acid sequence, 355 residues long: UDP-N-acetylglucosamine--N-acetylmuramyl-(pentapeptide) pyrophosphoryl-undecaprenol N-acetylglucosamine transferase (355 aa).

Residues 15 to 17 (TGG), asparagine 127, arginine 163, serine 191, isoleucine 244, 263 to 268 (ALTVSE), and glutamine 288 each bind UDP-N-acetyl-alpha-D-glucosamine.

The protein belongs to the glycosyltransferase 28 family. MurG subfamily.

The protein localises to the cell inner membrane. The catalysed reaction is di-trans,octa-cis-undecaprenyl diphospho-N-acetyl-alpha-D-muramoyl-L-alanyl-D-glutamyl-meso-2,6-diaminopimeloyl-D-alanyl-D-alanine + UDP-N-acetyl-alpha-D-glucosamine = di-trans,octa-cis-undecaprenyl diphospho-[N-acetyl-alpha-D-glucosaminyl-(1-&gt;4)]-N-acetyl-alpha-D-muramoyl-L-alanyl-D-glutamyl-meso-2,6-diaminopimeloyl-D-alanyl-D-alanine + UDP + H(+). It functions in the pathway cell wall biogenesis; peptidoglycan biosynthesis. Functionally, cell wall formation. Catalyzes the transfer of a GlcNAc subunit on undecaprenyl-pyrophosphoryl-MurNAc-pentapeptide (lipid intermediate I) to form undecaprenyl-pyrophosphoryl-MurNAc-(pentapeptide)GlcNAc (lipid intermediate II). The polypeptide is UDP-N-acetylglucosamine--N-acetylmuramyl-(pentapeptide) pyrophosphoryl-undecaprenol N-acetylglucosamine transferase (Salmonella enteritidis PT4 (strain P125109)).